The primary structure comprises 256 residues: Calsenilin (256 aa).

The interval 1-22 (MQRTKEAMKASDGSLLGDPGRI) is disordered. Ser-14 bears the Phosphoserine mark. Lys-26 is covalently cross-linked (Glycyl lysine isopeptide (Lys-Gly) (interchain with G-Cter in SUMO1)). 2 S-palmitoyl cysteine lipidation sites follow: Cys-45 and Cys-46. Phosphoserine occurs at positions 60 and 63. An EF-hand 1; degenerate domain is found at 67 to 123 (LELSTVRHQPEGLDQLQAQTKFTKKELQSLYRGFKNECPTGLVDEDTFKLIYSQFFP). Lys-90 participates in a covalent cross-link: Glycyl lysine isopeptide (Lys-Gly) (interchain with G-Cter in SUMO1). 3 consecutive EF-hand domains span residues 126 to 161 (DATT…LLRG), 162 to 197 (TVHE…IYDM), and 210 to 245 (APLE…DENI). The Ca(2+) site is built by Asp-175, Asn-177, Asp-179, Tyr-181, Glu-186, Asp-223, Asn-225, Asp-227, and Glu-234. The tract at residues 243–256 (ENIMSSMQLFENVI) is interaction with KCND2.

The protein belongs to the recoverin family. In terms of assembly, binds to DNA as a homomultimer. Dimerization is induced by binding to calcium. Interacts with the C-terminus of PSEN1 and PSEN2 and with PSEN2 CTF subunit. Associates with KCN1. Component of heteromultimeric potassium channels. Identified in potassium channel complexes containing KCND1, KCND2, KCND3, KCNIP1, KCNIP2, KCNIP3, KCNIP4, DPP6 and DPP10. Interacts with KCND2 and KCND3. Post-translationally, palmitoylated. Palmitoylation enhances association with the plasma membrane. Proteolytically cleaved by caspase-3. In terms of tissue distribution, detected in brain cortex, thalamus, dentate gyrus and cerebellum (at protein level). Expressed in brain. Colocalizes with KCND2 in excitatory neurons including cortical and hippocampal CA1 pyramidal cells.

The protein resides in the cytoplasm. It localises to the cell membrane. The protein localises to the endoplasmic reticulum. It is found in the golgi apparatus. Its subcellular location is the nucleus. Calcium-dependent transcriptional repressor that binds to the DRE element of genes including PDYN and FOS. Affinity for DNA is reduced upon binding to calcium and enhanced by binding to magnesium. Seems to be involved in nociception. Its function is as follows. Regulatory subunit of Kv4/D (Shal)-type voltage-gated rapidly inactivating A-type potassium channels, such as KCND2/Kv4.2 and KCND3/Kv4.3. Modulates channel expression at the cell membrane, gating characteristics, inactivation kinetics and rate of recovery from inactivation in a calcium-dependent and isoform-specific manner. Functionally, may play a role in the regulation of PSEN2 proteolytic processing and apoptosis. Together with PSEN2 involved in modulation of amyloid-beta formation. In Rattus norvegicus (Rat), this protein is Calsenilin (Kcnip3).